A 372-amino-acid chain; its full sequence is Pristinol synthase (372 aa).

Over residues 1-12 (MAHETTSGRRLP) the composition is skewed to basic and acidic residues. The disordered stretch occupies residues 1–23 (MAHETTSGRRLPDPTSPSDPTRR). 2 residues coordinate Mg(2+): Asp-100 and Asp-104. The DDXXD motif signature appears at 100 to 104 (DDQFD). Arg-197 provides a ligand contact to substrate. Mg(2+) is bound by residues Asn-243 and Ser-247. Residue Lys-250 participates in substrate binding. Mg(2+) is bound at residue Glu-251. Residue 337–338 (RY) participates in substrate binding. The segment at 349–372 (GRRRPWDGLTTATGTASPRHPRRA) is disordered.

It belongs to the terpene synthase family. Requires Mg(2+) as cofactor.

The catalysed reaction is (2E,6E)-farnesyl diphosphate + H2O = (+)-(2S,3R,9R)-pristinol + diphosphate. Its pathway is secondary metabolite biosynthesis; terpenoid biosynthesis. Catalyzes the conversion of (2E,6E)-farnesyl diphosphate (FPP) to yield a new 5-8 bicyclic (pristinane) sesquiterpenol (+)-(2S,3R,9R)-pristinol via a 1,11-cyclization, which requires the abstraction of the pyrophosphate from FPP to yield the humulyl cation. The only accepted substrate is farnesyl diphosphate (FPP). This is Pristinol synthase from Streptomyces pristinaespiralis (strain ATCC 25486 / DSM 40338 / CBS 914.69 / JCM 4507 / KCC S-0507 / NBRC 13074 / NRRL 2958 / 5647).